The sequence spans 357 residues: (4E)-oxalomesaconate Delta-isomerase (357 aa).

Belongs to the PrpF family.

The enzyme catalyses (1E)-4-oxobut-1-ene-1,2,4-tricarboxylate = (3Z)-2-oxo-4-carboxy-3-hexenedioate. The protein operates within secondary metabolite metabolism; lignin degradation. Its function is as follows. Contributes to the degradation of lignin at the level of the protocatechuate 4,5-cleavage pathway. Catalyzes the isomerization of the double bond between C4 and C5 in (4E)-oxalomesaconate (OMA) to (3Z)-2-keto-4-carboxy-3-hexenedioate (KCH), where the double bond has migrated between C3 and C4 via a 1,3-allylic isomerization. This is (4E)-oxalomesaconate Delta-isomerase from Novosphingobium sp. (strain KA1) (Sphingomonas sp. (strain KA1)).